The sequence spans 444 residues: MREIVHIQAGQCGNQIGAKFWEVISDEHGIDPTGTYHGDSDLQLDRISVYYNEATGGKYVPRAILVDLEPGTMDSVRSGPFGQIFRPDNFVFGQSGAGNNWAKGHYTEGAELVDSVLDVVRKEAESCDCLQGFQLTHSLGGGTGSGMGTLLISKIREEYPDRIMNTFSVVPSPKVSDTVVEPYNATLSVHQLVENTDETYCIDNEALYDICFRTLKLTTPTYGDLNHLVSATMSGVTTCLRFPGQLNADLRKLAVNMVPFPRLHFFMPGFAPLTSRGSQQYRALTVPELTQQVFDAKNMMAACDPRHGRYLTVAAVFRGRMSMKEVDEQMLNVQNKNSSYFVEWIPNNVKTAVCDIPPRGLKMAVTFIGNSTAIQELFKRISEQFTAMFRRKAFLHWYTGEGMDEMEFTEAESNMNDLVSEYQQYQDATAEEEEDFGEEAEEEA.

The short motif at 1 to 4 (MREI) is the MREI motif element. Residue Gln-11 participates in GTP binding. Ser-40 is subject to Phosphoserine. A Phosphothreonine modification is found at Thr-55. Position 58 is an N6-acetyllysine; alternate (Lys-58). Lys-58 carries the N6-succinyllysine; alternate modification. Lys-58 participates in a covalent cross-link: Glycyl lysine isopeptide (Lys-Gly) (interchain with G-Cter in ubiquitin); alternate. Residues Glu-69, Ser-138, Gly-142, Thr-143, and Gly-144 each contribute to the GTP site. Glu-69 lines the Mg(2+) pocket. The residue at position 172 (Ser-172) is a Phosphoserine; by CDK1. Positions 204 and 226 each coordinate GTP. Thr-285 and Thr-290 each carry phosphothreonine. Arg-318 bears the Omega-N-methylarginine mark. Lys-324 is covalently cross-linked (Glycyl lysine isopeptide (Lys-Gly) (interchain with G-Cter in ubiquitin)). The interval 423–444 (QQYQDATAEEEEDFGEEAEEEA) is disordered. Over residues 429–444 (TAEEEEDFGEEAEEEA) the composition is skewed to acidic residues. Residues Glu-434, Glu-438, Glu-439, and Glu-441 each carry the 5-glutamyl polyglutamate modification. Glu-438, Glu-439, Glu-441, Glu-442, and Glu-443 each carry 5-glutamyl glycine.

It belongs to the tubulin family. In terms of assembly, heterodimer of alpha and beta chains. A typical microtubule is a hollow water-filled tube with an outer diameter of 25 nm and an inner diameter of 15 nM. Alpha-beta heterodimers associate head-to-tail to form protofilaments running lengthwise along the microtubule wall with the beta-tubulin subunit facing the microtubule plus end conferring a structural polarity. Microtubules usually have 13 protofilaments but different protofilament numbers can be found in some organisms and specialized cells. Interacts with CIMAP3. Interacts with DIAPH1. Interacts with MX1. May interact with RNABP10. Interacts with CFAP157. Nascent tubulin polypeptide interacts (via beta-tubulin MREI motif) with TTC5/STRAP; this interaction results in tubulin mRNA-targeted degradation. It depends on Mg(2+) as a cofactor. Some glutamate residues at the C-terminus are polyglycylated, resulting in polyglycine chains on the gamma-carboxyl group. Glycylation is mainly limited to tubulin incorporated into axonemes (cilia and flagella) whereas glutamylation is prevalent in neuronal cells, centrioles, axonemes, and the mitotic spindle. Both modifications can coexist on the same protein on adjacent residues, and lowering polyglycylation levels increases polyglutamylation, and reciprocally. Cilia and flagella glycylation is required for their stability and maintenance. Flagella glycylation controls sperm motility. In terms of processing, some glutamate residues at the C-terminus are polyglutamylated, resulting in polyglutamate chains on the gamma-carboxyl group. Polyglutamylation plays a key role in microtubule severing by spastin (SPAST). SPAST preferentially recognizes and acts on microtubules decorated with short polyglutamate tails: severing activity by SPAST increases as the number of glutamates per tubulin rises from one to eight, but decreases beyond this glutamylation threshold. Glutamylation is also involved in cilia motility. Post-translationally, phosphorylated on Ser-172 by CDK1 during the cell cycle, from metaphase to telophase, but not in interphase. This phosphorylation inhibits tubulin incorporation into microtubules.

It is found in the cytoplasm. It localises to the cytoskeleton. In terms of biological role, tubulin is the major constituent of microtubules, a cylinder consisting of laterally associated linear protofilaments composed of alpha- and beta-tubulin heterodimers. Microtubules grow by the addition of GTP-tubulin dimers to the microtubule end, where a stabilizing cap forms. Below the cap, tubulin dimers are in GDP-bound state, owing to GTPase activity of alpha-tubulin. This Sus scrofa (Pig) protein is Tubulin beta chain (TUBB).